Consider the following 123-residue polypeptide: Large ribosomal subunit protein bL20 (123 aa).

Belongs to the bacterial ribosomal protein bL20 family.

Functionally, binds directly to 23S ribosomal RNA and is necessary for the in vitro assembly process of the 50S ribosomal subunit. It is not involved in the protein synthesizing functions of that subunit. In Chlamydia trachomatis serovar D (strain ATCC VR-885 / DSM 19411 / UW-3/Cx), this protein is Large ribosomal subunit protein bL20 (rplT).